We begin with the raw amino-acid sequence, 358 residues long: Peptide chain release factor 1 (358 aa).

Position 236 is an N5-methylglutamine (Gln236).

This sequence belongs to the prokaryotic/mitochondrial release factor family. Post-translationally, methylated by PrmC. Methylation increases the termination efficiency of RF1.

The protein resides in the cytoplasm. Its function is as follows. Peptide chain release factor 1 directs the termination of translation in response to the peptide chain termination codons UAG and UAA. This chain is Peptide chain release factor 1, found in Corynebacterium aurimucosum (strain ATCC 700975 / DSM 44827 / CIP 107346 / CN-1) (Corynebacterium nigricans).